We begin with the raw amino-acid sequence, 756 residues long: ATP-dependent zinc metalloprotease FtsH (756 aa).

Over 1 to 44 (MGVPAGMPHPNGLQPQRKDKALAQNPNTPQKGSEAFLKKLIHSS) the chain is Cytoplasmic. The helical transmembrane segment at 45-65 (WFFPGAAIVVMLGFLMASFFT) threads the bilayer. At 66 to 148 (QPSRQVDTNV…SYTDQPVEHS (83 aa)) the chain is on the extracellular side. Residues 149-169 (FLGSLVSLLLPILLFGVLFWF) traverse the membrane as a helical segment. The Cytoplasmic portion of the chain corresponds to 170–756 (LMGRVGGGSS…NQNGAENERG (587 aa)). An ATP-binding site is contributed by 241-248 (GPPGTGKT). His-463 lines the Zn(2+) pocket. Residue Glu-464 is part of the active site. Zn(2+) contacts are provided by His-467 and Asp-539. Basic and acidic residues-rich tracts occupy residues 647 to 662 (PERE…ERTD) and 672 to 681 (LAKEAEKSEE). The tract at residues 647-756 (PEREHWYSKP…NQNGAENERG (110 aa)) is disordered. Low complexity-rich tracts occupy residues 684-703 (AEAP…VPVA) and 713-724 (PLTDPDADPTVA). The segment covering 744–756 (GTPNQNGAENERG) has biased composition (polar residues).

It in the central section; belongs to the AAA ATPase family. This sequence in the C-terminal section; belongs to the peptidase M41 family. In terms of assembly, homohexamer. Zn(2+) serves as cofactor.

Its subcellular location is the cell membrane. Functionally, acts as a processive, ATP-dependent zinc metallopeptidase for both cytoplasmic and membrane proteins. Plays a role in the quality control of integral membrane proteins. The chain is ATP-dependent zinc metalloprotease FtsH from Rothia mucilaginosa (strain DY-18) (Stomatococcus mucilaginosus).